Here is a 231-residue protein sequence, read N- to C-terminus: Glutathione-S-transferase (231 aa).

The GST N-terminal domain occupies 15–98 (LFAVKGTATS…YIADAYDKDG (84 aa)).

Belongs to the GST superfamily.

The catalysed reaction is RX + glutathione = an S-substituted glutathione + a halide anion + H(+). Functionally, conjugation of reduced glutathione to a wide number of exogenous and endogenous hydrophobic electrophiles. This is Glutathione-S-transferase from Alternaria alternata (Alternaria rot fungus).